The chain runs to 212 residues: MTLIAVIDYDMGNLHSACKGLETVGAVPKITDSPLDLEKADAIVLPGVGSFDPAVRQIRSRHLEKPIKAAIANGKPFLGICLGLQILFETSEEGQEAGLGIIPGTVRRFRSEPGITIPHMGWNQLDFTQPDHALWQGLPPHPHVYFVHSYYVDPLDSHLTAATVTHGSQTVTAAIARDRLVAVQFHPEKSSTNGLKILANFVQQVQKLALVS.

Residues 3-211 (LIAVIDYDMG…VQQVQKLALV (209 aa)) form the Glutamine amidotransferase type-1 domain. The active-site Nucleophile is the cysteine 81. Active-site residues include histidine 186 and glutamate 188.

As to quaternary structure, heterodimer of HisH and HisF.

Its subcellular location is the cytoplasm. The catalysed reaction is 5-[(5-phospho-1-deoxy-D-ribulos-1-ylimino)methylamino]-1-(5-phospho-beta-D-ribosyl)imidazole-4-carboxamide + L-glutamine = D-erythro-1-(imidazol-4-yl)glycerol 3-phosphate + 5-amino-1-(5-phospho-beta-D-ribosyl)imidazole-4-carboxamide + L-glutamate + H(+). The enzyme catalyses L-glutamine + H2O = L-glutamate + NH4(+). The protein operates within amino-acid biosynthesis; L-histidine biosynthesis; L-histidine from 5-phospho-alpha-D-ribose 1-diphosphate: step 5/9. Its function is as follows. IGPS catalyzes the conversion of PRFAR and glutamine to IGP, AICAR and glutamate. The HisH subunit catalyzes the hydrolysis of glutamine to glutamate and ammonia as part of the synthesis of IGP and AICAR. The resulting ammonia molecule is channeled to the active site of HisF. This is Imidazole glycerol phosphate synthase subunit HisH from Microcystis aeruginosa (strain NIES-843 / IAM M-2473).